A 90-amino-acid chain; its full sequence is Small ribosomal subunit protein bS16 (90 aa).

It belongs to the bacterial ribosomal protein bS16 family.

The protein is Small ribosomal subunit protein bS16 of Clostridioides difficile (strain 630) (Peptoclostridium difficile).